The primary structure comprises 575 residues: Chaperonin 60 subunit alpha 2, chloroplastic (575 aa).

Positions 1–18 (MFAVSPSSFSPTTISPRR) are enriched in low complexity. Positions 1-27 (MFAVSPSSFSPTTISPRRSGQRNEPRK) are disordered. A chloroplast-targeting transit peptide spans 1 to 32 (MFAVSPSSFSPTTISPRRSGQRNEPRKFSVVR).

It belongs to the chaperonin (HSP60) family. Part of the Cpn60 complex composed of 7 alpha and 7 beta subunits.

The protein localises to the plastid. It is found in the chloroplast. Functionally, involved in protein assisted folding. The sequence is that of Chaperonin 60 subunit alpha 2, chloroplastic (CPN60A2) from Arabidopsis thaliana (Mouse-ear cress).